The primary structure comprises 609 residues: Spore-specific protein YSW1 (609 aa).

Residues 1-24 (MSSLADTVEGSEAKRGRFSNNALT) are disordered. Ser159 and Ser160 each carry phosphoserine. Positions 162 to 225 (DENESHFTDA…DDEFSPATPP (64 aa)) are disordered. A compositionally biased stretch (polar residues) spans 169 to 179 (TDANSHVMQSK). Residues 200–209 (LKKEYEKSFE) are compositionally biased toward basic and acidic residues. Over residues 210–219 (EYSDDSDDEF) the composition is skewed to acidic residues.

This is Spore-specific protein YSW1 (YSW1) from Saccharomyces cerevisiae (strain ATCC 204508 / S288c) (Baker's yeast).